Here is a 430-residue protein sequence, read N- to C-terminus: Adenylosuccinate synthetase (430 aa).

GTP-binding positions include 12–18 (GDEGKGK) and 40–42 (GHT). Catalysis depends on Asp13, which acts as the Proton acceptor. Mg(2+)-binding residues include Asp13 and Gly40. Residues 13–16 (DEGK), 38–41 (NAGH), Thr128, Arg142, Gln223, Thr238, and Arg302 each bind IMP. The active-site Proton donor is the His41. 298 to 304 (VNTGRKR) is a binding site for substrate. GTP contacts are provided by residues Arg304, 330-332 (KLD), and 412-414 (GVG).

This sequence belongs to the adenylosuccinate synthetase family. Homodimer. Mg(2+) serves as cofactor.

Its subcellular location is the cytoplasm. It catalyses the reaction IMP + L-aspartate + GTP = N(6)-(1,2-dicarboxyethyl)-AMP + GDP + phosphate + 2 H(+). The protein operates within purine metabolism; AMP biosynthesis via de novo pathway; AMP from IMP: step 1/2. Functionally, plays an important role in the de novo pathway of purine nucleotide biosynthesis. Catalyzes the first committed step in the biosynthesis of AMP from IMP. This Corynebacterium aurimucosum (strain ATCC 700975 / DSM 44827 / CIP 107346 / CN-1) (Corynebacterium nigricans) protein is Adenylosuccinate synthetase.